Reading from the N-terminus, the 1008-residue chain is ATP-dependent DNA/RNA helicase DHX36 (1008 aa).

The segment at 1-51 is required for recruitment to cytoplasmic stress granules; sequence MSYDYHQNWGRDGGPRSSGGGYGGGPAGGHGGNRGSGGGGGGGGGGRGGRG. Positions 1–58 are disordered; sequence MSYDYHQNWGRDGGPRSSGGGYGGGPAGGHGGNRGSGGGGGGGGGGRGGRGRHPGHLK. The segment at 1–104 is required for the pre-miR-134 transport; that stretch reads MSYDYHQNWG…IVQLLNSVQA (104 aa). The tract at residues 1–200 is necessary for nuclear and nucleolar caps localizations; the sequence is MSYDYHQNWG…KKNDLRYIEM (200 aa). Positions 16–48 are enriched in gly residues; it reads RSSGGGYGGGPAGGHGGNRGSGGGGGGGGGGRG. The interval 53–75 is DSM (DHX36-specific motif); the sequence is HPGHLKGREIGMWYAKKQGQKNK. The tract at residues 53–105 is required for G4-DNA- and G4-RNA-binding; that stretch reads HPGHLKGREIGMWYAKKQGQKNKEAERQERAVVHMDERREEQIVQLLNSVQAK. Residues 72–157 are a coiled coil; that stretch reads QKNKEAERQE…INQEKKMFRI (86 aa). RecA-like domain stretches follow at residues 106–386 and 387–628; these read NDKE…MIHI and PGFT…DYQL. Ser161 is subject to Phosphoserine. Positions 217–387 constitute a Helicase ATP-binding domain; that stretch reads VNLIDNHQVT…FGNCPMIHIP (171 aa). 233–238 provides a ligand contact to ATP; sequence GCGKTT. Residues 265–317 are necessary for interaction with single-stranded DNA at the 3'-end of the G4-DNA structure; it reads RRISAISVAERVAAERAESCGSGNSTGYQIRLQSRLPRKQGSILYCTTGIILQ. Residues 334–337 carry the DEAH box motif; it reads DEIH. Mg(2+) contacts are provided by Glu335 and His337. Residues 477–647 enclose the Helicase C-terminal domain; it reads ALIRYIVLEE…ELCLQIKILR (171 aa). Positions 498-557 are necessary for interaction with single-stranded DNA at the 3'-end of the G4-DNA structure; that stretch reads WDNISTLHDLLMSQVMFKSDKFLIIPLHSLMPTVNQTQVFKRTPPGVRKIVIATNIAETS. Residues 517 to 528 carry the Nuclear localization signal motif; the sequence is DKFLIIPLHSLM. ATP is bound by residues Ser557 and 602-605; that span reads RAGR. The WH domain stretch occupies residues 629–698; that stretch reads PEILRTPLEE…LGVHLARLPV (70 aa). Necessary for interaction with single-stranded DNA at the 3'-end of the G4-DNA structure regions lie at residues 638–697, 849–860, and 870–900; these read ELCL…ARLP, NLGKKRKMVKVY, and HPKS…IYLY. The segment at 841–905 is OB-fold-like subdomains; the sequence is PKVAKIRLNL…SIYLYDCTEV (65 aa). Residue Lys947 is modified to N6-acetyllysine. Ser963 is subject to Phosphoserine.

It belongs to the DEAD box helicase family. DEAH subfamily. In terms of assembly, found in a multi-helicase-TICAM1 complex at least composed of DHX36, DDX1, DDX21 and TICAM1; this complex exists in resting cells with or without dsRNA poly(I:C) ligand stimulation. Interacts (via C-terminus) with TICAM1 (via TIR domain). Interacts (via C-terminus) with DDX21; this interaction serves as bridges to TICAM1. Interacts with TERT; this interaction is dependent on the ability of DHX36 to bind to the G-quadruplex RNA (G4-RNA) structure present in the telomerase RNA template component (TERC). Interacts with DKC1; this interaction is dependent on the ability of DHX36 to bind to the G4-RNA structure present in TERC. Interacts with PARN; this interaction stimulates PARN to enhance uPA mRNA decay. Interacts with EXOSC3; this interaction occurs in a RNase-insensitive manner. Interacts with EXOSC10; this interaction occurs in a RNase-insensitive manner. Interacts with ILF3; this interaction occurs in a RNA-dependent manner. Interacts with ELAVL1; this interaction occurs in an RNA-dependent manner. Interacts with DDX5; this interaction occurs in a RNA-dependent manner. Interacts with DDX17; this interaction occurs in a RNA-dependent manner. Interacts with HDAC1; this interaction occurs in a RNA-dependent manner. Interacts with HDAC3; this interaction occurs in a RNA-dependent manner. Interacts with HDAC4. Interacts with AGO1. Interacts with AGO2. Interacts with ERCC6. Mg(2+) serves as cofactor. Highly expressed in testis.

The protein localises to the nucleus. The protein resides in the cytoplasm. It localises to the cytosol. Its subcellular location is the stress granule. It is found in the nucleus speckle. The protein localises to the chromosome. The protein resides in the telomere. It localises to the mitochondrion. Its subcellular location is the perikaryon. It is found in the cell projection. The protein localises to the dendrite. The protein resides in the axon. The enzyme catalyses ATP + H2O = ADP + phosphate + H(+). ATPase activity is enhanced in the presence of homomeric poly(U) RNAs, but not by double-stranded DNA (dsDNA), double-stranded RNA (dsRNA) and tRNA. In terms of biological role, multifunctional ATP-dependent helicase that unwinds G-quadruplex (G4) structures. Plays a role in many biological processes such as genomic integrity, gene expression regulations and as a sensor to initiate antiviral responses. G4 structures correspond to helical structures containing guanine tetrads. Binds with high affinity to and unwinds G4 structures that are formed in nucleic acids (G4-DNA and G4-RNA). Plays a role in genomic integrity. Converts the G4-RNA structure present in telomerase RNA template component (TREC) into a double-stranded RNA to promote P1 helix formation that acts as a template boundary ensuring accurate reverse transcription. Plays a role in transcriptional regulation. Resolves G4-DNA structures in promoters of genes, such as YY1, KIT/c-kit and ALPL and positively regulates their expression. Plays a role in post-transcriptional regulation. Unwinds a G4-RNA structure located in the 3'-UTR polyadenylation site of the pre-mRNA TP53 and stimulates TP53 pre-mRNA 3'-end processing in response to ultraviolet (UV)-induced DNA damage. Binds to the precursor-microRNA-134 (pre-miR-134) terminal loop and regulates its transport into the synapto-dendritic compartment. Involved in the pre-miR-134-dependent inhibition of target gene expression and the control of dendritic spine size. Plays a role in the regulation of cytoplasmic mRNA translation and mRNA stability. Binds to both G4-RNA structures and alternative non-quadruplex-forming sequence within the 3'-UTR of the PITX1 mRNA regulating negatively PITX1 protein expression. Binds to both G4-RNA structure in the 5'-UTR and AU-rich elements (AREs) localized in the 3'-UTR of NKX2-5 mRNA to either stimulate protein translation or induce mRNA decay in an ELAVL1-dependent manner, respectively. Also binds to ARE sequences present in several mRNAs mediating exosome-mediated 3'-5' mRNA degradation. Involved in cytoplasmic urokinase-type plasminogen activator (uPA) mRNA decay. Component of a multi-helicase-TICAM1 complex that acts as a cytoplasmic sensor of viral double-stranded RNA (dsRNA) and plays a role in the activation of a cascade of antiviral responses including the induction of pro-inflammatory cytokines via the adapter molecule TICAM1. Required for early embryonic development and hematopoiesis. Involved in the regulation of cardioblast differentiation and proliferation during heart development. Involved in spermatogonia differentiation. May play a role in ossification. The protein is ATP-dependent DNA/RNA helicase DHX36 of Homo sapiens (Human).